We begin with the raw amino-acid sequence, 59 residues long: Large ribosomal subunit protein uL30 (59 aa).

The protein belongs to the universal ribosomal protein uL30 family. Part of the 50S ribosomal subunit.

In Brachyspira hyodysenteriae (strain ATCC 49526 / WA1), this protein is Large ribosomal subunit protein uL30.